The chain runs to 144 residues: D-aminoacyl-tRNA deacylase (144 aa).

Residues Gly-136–Pro-137 carry the Gly-cisPro motif, important for rejection of L-amino acids motif.

The protein belongs to the DTD family. As to quaternary structure, homodimer.

It is found in the cytoplasm. The enzyme catalyses glycyl-tRNA(Ala) + H2O = tRNA(Ala) + glycine + H(+). It catalyses the reaction a D-aminoacyl-tRNA + H2O = a tRNA + a D-alpha-amino acid + H(+). An aminoacyl-tRNA editing enzyme that deacylates mischarged D-aminoacyl-tRNAs. Also deacylates mischarged glycyl-tRNA(Ala), protecting cells against glycine mischarging by AlaRS. Acts via tRNA-based rather than protein-based catalysis; rejects L-amino acids rather than detecting D-amino acids in the active site. By recycling D-aminoacyl-tRNA to D-amino acids and free tRNA molecules, this enzyme counteracts the toxicity associated with the formation of D-aminoacyl-tRNA entities in vivo and helps enforce protein L-homochirality. The polypeptide is D-aminoacyl-tRNA deacylase (Vibrio vulnificus (strain CMCP6)).